We begin with the raw amino-acid sequence, 82 residues long: Small ribosomal subunit protein bTHXm (82 aa).

Residues 1–22 (MAMRLAAAAAFVRRLVPARNPV) constitute a mitochondrion transit peptide. The tract at residues 34–56 (RGDKKTKRGKRFKGSYGNARPKR) is disordered. The segment covering 37-46 (KKTKRGKRFK) has biased composition (basic residues).

The protein belongs to the bacterial ribosomal protein bTHX family.

The protein resides in the mitochondrion. The chain is Small ribosomal subunit protein bTHXm from Oryza sativa subsp. japonica (Rice).